A 99-amino-acid polypeptide reads, in one-letter code: Glycine-rich protein (99 aa).

Positions 1-18 are cleaved as a signal peptide; it reads MKSMIAVLLLALVATSMA.

Belongs to the non-disulfide-bridged peptide (NDBP) superfamily. As to expression, expressed by the venom gland.

The protein localises to the secreted. The sequence is that of Glycine-rich protein from Lychas mucronatus (Chinese swimming scorpion).